We begin with the raw amino-acid sequence, 527 residues long: 4-alpha-glucanotransferase (527 aa).

It belongs to the disproportionating enzyme family.

It localises to the cytoplasm. The enzyme catalyses Transfers a segment of a (1-&gt;4)-alpha-D-glucan to a new position in an acceptor, which may be glucose or a (1-&gt;4)-alpha-D-glucan.. This chain is 4-alpha-glucanotransferase (malQ), found in Chlamydia trachomatis serovar D (strain ATCC VR-885 / DSM 19411 / UW-3/Cx).